Consider the following 471-residue polypeptide: Methionine aminopeptidase 2 (471 aa).

Disordered stretches follow at residues 16-80 (VVDD…IDRF) and 92-139 (CEHP…DFNR). Positions 32 to 47 (EDGDDNDDAVNEGEAV) are enriched in acidic residues. Over residues 52–65 (KKKKKKNKKKKKKG) the composition is skewed to basic residues. The span at 119–139 (AEERAKDDAKHGSDDPLDFNR) shows a compositional bias: basic and acidic residues. Substrate is bound at residue histidine 224. A divalent metal cation is bound by residues aspartate 244, aspartate 255, and histidine 324. Histidine 332 is a binding site for substrate. Positions 357 and 452 each coordinate a divalent metal cation.

This sequence belongs to the peptidase M24A family. Methionine aminopeptidase eukaryotic type 2 subfamily. Co(2+) is required as a cofactor. Requires Zn(2+) as cofactor. The cofactor is Mn(2+). It depends on Fe(2+) as a cofactor.

The protein resides in the cytoplasm. It catalyses the reaction Release of N-terminal amino acids, preferentially methionine, from peptides and arylamides.. Functionally, cotranslationally removes the N-terminal methionine from nascent proteins. The N-terminal methionine is often cleaved when the second residue in the primary sequence is small and uncharged (Met-Ala-, Cys, Gly, Pro, Ser, Thr, or Val). In Yarrowia lipolytica (strain CLIB 122 / E 150) (Yeast), this protein is Methionine aminopeptidase 2.